We begin with the raw amino-acid sequence, 758 residues long: 5-methyltetrahydropteroyltriglutamate--homocysteine methyltransferase (758 aa).

5-methyltetrahydropteroyltri-L-glutamate-binding positions include 17 to 20 (RELK) and lysine 117. L-homocysteine contacts are provided by residues 434 to 436 (IGS) and glutamate 487. L-methionine-binding positions include 434–436 (IGS) and glutamate 487. 5-methyltetrahydropteroyltri-L-glutamate contacts are provided by residues 518–519 (RC) and tryptophan 564. Aspartate 602 lines the L-homocysteine pocket. Aspartate 602 is a binding site for L-methionine. Glutamate 608 lines the 5-methyltetrahydropteroyltri-L-glutamate pocket. Residues histidine 644, cysteine 646, and glutamate 668 each contribute to the Zn(2+) site. The active-site Proton donor is histidine 697. Cysteine 729 contacts Zn(2+).

It belongs to the vitamin-B12 independent methionine synthase family. Requires Zn(2+) as cofactor.

It carries out the reaction 5-methyltetrahydropteroyltri-L-glutamate + L-homocysteine = tetrahydropteroyltri-L-glutamate + L-methionine. The protein operates within amino-acid biosynthesis; L-methionine biosynthesis via de novo pathway; L-methionine from L-homocysteine (MetE route): step 1/1. In terms of biological role, catalyzes the transfer of a methyl group from 5-methyltetrahydrofolate to homocysteine resulting in methionine formation. This Photorhabdus laumondii subsp. laumondii (strain DSM 15139 / CIP 105565 / TT01) (Photorhabdus luminescens subsp. laumondii) protein is 5-methyltetrahydropteroyltriglutamate--homocysteine methyltransferase.